The following is a 155-amino-acid chain: Small ribosomal subunit protein uS7cz/uS7cy (155 aa).

Component of the chloroplast small ribosomal subunit (SSU). Mature 70S chloroplast ribosomes of higher plants consist of a small (30S) and a large (50S) subunit. The 30S small subunit contains 1 molecule of ribosomal RNA (16S rRNA) and 24 different proteins. The 50S large subunit contains 3 rRNA molecules (23S, 5S and 4.5S rRNA) and 33 different proteins.

It is found in the plastid. Its subcellular location is the chloroplast. Component of the chloroplast ribosome (chloro-ribosome), a dedicated translation machinery responsible for the synthesis of chloroplast genome-encoded proteins, including proteins of the transcription and translation machinery and components of the photosynthetic apparatus. The polypeptide is Small ribosomal subunit protein uS7cz/uS7cy (rps7-A) (Spinacia oleracea (Spinach)).